The primary structure comprises 161 residues: Regulator of ribonuclease activity A (161 aa).

This sequence belongs to the RraA family. In terms of assembly, homotrimer. Binds to both RNA-binding sites in the C-terminal region of Rne and to RhlB.

The protein localises to the cytoplasm. In terms of biological role, globally modulates RNA abundance by binding to RNase E (Rne) and regulating its endonucleolytic activity. Can modulate Rne action in a substrate-dependent manner by altering the composition of the degradosome. Modulates RNA-binding and helicase activities of the degradosome. The chain is Regulator of ribonuclease activity A from Cronobacter sakazakii (strain ATCC BAA-894) (Enterobacter sakazakii).